A 346-amino-acid polypeptide reads, in one-letter code: Short-wave-sensitive opsin 1 (346 aa).

Residues 1–31 (MSGEDEFYLFQNISSVGPWDGPQYHIAPVWA) lie on the Extracellular side of the membrane. A glycan (N-linked (GlcNAc...) asparagine) is linked at asparagine 12. The helical transmembrane segment at 32 to 56 (FHLQAAFMGFVFFAGTPLNATVLVA) threads the bilayer. The Cytoplasmic portion of the chain corresponds to 57-68 (TLHYKKLRQPLN). The helical transmembrane segment at 69–94 (YILVNVSLGGFLFCIFSVFTVFIASC) threads the bilayer. At 95–108 (HGYFLFGRHVCALE) the chain is on the extracellular side. A disulfide bond links cysteine 105 and cysteine 182. A helical transmembrane segment spans residues 109–128 (AFLGSVAGLVTGWSLAFLAF). Topologically, residues 129–147 (ERYLVICKPFGNIRFNSKH) are cytoplasmic. A helical transmembrane segment spans residues 148–171 (ALTVVLITWTIGIGVSIPPFFGWS). At 172-197 (RFIPEGLQCSCGPDWYTVGTKYRSEH) the chain is on the extracellular side. Residues 198 to 225 (YTWFLFIFCFIIPLSLICFSYFQLLRTL) traverse the membrane as a helical segment. Residues 226–247 (RAVAAQQQESATTQKAEREVSH) are Cytoplasmic-facing. A helical transmembrane segment spans residues 248–271 (MVVVMVGSFCLCYVPYAALAMYMV). The Extracellular portion of the chain corresponds to 272 to 279 (NNRNHGLY). Residues 280–304 (LRLVTIPAFFSKSSCVYNPIIYCFM) traverse the membrane as a helical segment. Lysine 291 is subject to N6-(retinylidene)lysine. Residues 305 to 346 (NKQFRACILEMVCRKPMTDESDMSGSQKTEVSTVSSSKVGPH) lie on the Cytoplasmic side of the membrane. A disordered region spans residues 322-346 (TDESDMSGSQKTEVSTVSSSKVGPH). The span at 330–346 (SQKTEVSTVSSSKVGPH) shows a compositional bias: low complexity.

It belongs to the G-protein coupled receptor 1 family. Opsin subfamily. Post-translationally, phosphorylated on some or all of the serine and threonine residues present in the C-terminal region. Expressed in cone photoreceptor cells.

Its subcellular location is the cell membrane. The protein resides in the photoreceptor inner segment. It is found in the cell projection. It localises to the cilium. The protein localises to the photoreceptor outer segment. Its subcellular location is the cytoplasm. The protein resides in the perinuclear region. Functionally, visual pigments are the light-absorbing molecules that mediate vision. They consist of an apoprotein, opsin, covalently linked to cis-retinal. Required for the maintenance of cone outer segment organization in the ventral retina, but not essential for the maintenance of functioning cone photoreceptors. Involved in ensuring correct abundance and localization of retinal membrane proteins. May increase spectral sensitivity in dim light. The polypeptide is Short-wave-sensitive opsin 1 (Opn1sw) (Rattus norvegicus (Rat)).